We begin with the raw amino-acid sequence, 196 residues long: 3-isopropylmalate dehydratase small subunit (196 aa).

This sequence belongs to the LeuD family. LeuD type 1 subfamily. Heterodimer of LeuC and LeuD.

The enzyme catalyses (2R,3S)-3-isopropylmalate = (2S)-2-isopropylmalate. Its pathway is amino-acid biosynthesis; L-leucine biosynthesis; L-leucine from 3-methyl-2-oxobutanoate: step 2/4. Its function is as follows. Catalyzes the isomerization between 2-isopropylmalate and 3-isopropylmalate, via the formation of 2-isopropylmaleate. The sequence is that of 3-isopropylmalate dehydratase small subunit from Corynebacterium diphtheriae (strain ATCC 700971 / NCTC 13129 / Biotype gravis).